A 506-amino-acid polypeptide reads, in one-letter code: uncharacterized protein (506 aa).

This sequence to group II intron maturases.

The protein resides in the plastid. Its subcellular location is the chloroplast. This is an uncharacterized protein from Euglena gracilis.